The primary structure comprises 143 residues: 3-dehydroquinate dehydratase (143 aa).

Y22 (proton acceptor) is an active-site residue. The substrate site is built by N73, H79, and D86. The active-site Proton donor is H99. Substrate is bound by residues 100 to 101 (LS) and R110.

The protein belongs to the type-II 3-dehydroquinase family. Homododecamer.

It catalyses the reaction 3-dehydroquinate = 3-dehydroshikimate + H2O. It participates in metabolic intermediate biosynthesis; chorismate biosynthesis; chorismate from D-erythrose 4-phosphate and phosphoenolpyruvate: step 3/7. Catalyzes a trans-dehydration via an enolate intermediate. The protein is 3-dehydroquinate dehydratase of Salinispora tropica (strain ATCC BAA-916 / DSM 44818 / JCM 13857 / NBRC 105044 / CNB-440).